The chain runs to 329 residues: Biotin synthase (329 aa).

The Radical SAM core domain occupies 46–275 (YYGNKVKLNM…TKEIRISGGR (230 aa)). 3 residues coordinate [4Fe-4S] cluster: C64, C68, and C71. C108, C140, C200, and R270 together coordinate [2Fe-2S] cluster.

The protein belongs to the radical SAM superfamily. Biotin synthase family. Homodimer. [4Fe-4S] cluster is required as a cofactor. [2Fe-2S] cluster serves as cofactor.

It carries out the reaction (4R,5S)-dethiobiotin + (sulfur carrier)-SH + 2 reduced [2Fe-2S]-[ferredoxin] + 2 S-adenosyl-L-methionine = (sulfur carrier)-H + biotin + 2 5'-deoxyadenosine + 2 L-methionine + 2 oxidized [2Fe-2S]-[ferredoxin]. The protein operates within cofactor biosynthesis; biotin biosynthesis; biotin from 7,8-diaminononanoate: step 2/2. Functionally, catalyzes the conversion of dethiobiotin (DTB) to biotin by the insertion of a sulfur atom into dethiobiotin via a radical-based mechanism. In Anoxybacillus flavithermus (strain DSM 21510 / WK1), this protein is Biotin synthase.